Consider the following 280-residue polypeptide: Myelin proteolipid protein A (280 aa).

Topologically, residues 1–10 (MGWHDGCIRC) are cytoplasmic. S-palmitoyl cysteine attachment occurs at residues Cys7 and Cys10. A helical membrane pass occupies residues 11-36 (MVGVPFASVIATVLCFAGVALFCGCG). Residues 37 to 59 (HEALSGTEKLIETYFSKNYQEYE) lie on the Extracellular side of the membrane. The chain crosses the membrane as a helical span at residues 60 to 88 (YLIHVINAFQYVIYGIAIFFFLFGILLLA). Residues 89-152 (EGFYTTTAIK…LGKWLGHPDK (64 aa)) are Cytoplasmic-facing. Residues Cys140 and Cys142 are each lipidated (S-palmitoyl cysteine). The chain crosses the membrane as a helical span at residues 153 to 179 (FVGVTYIITILWILIFACSAVPVYIYF). Residues 180 to 239 (NTWVTCQSIAFPGKTTTSVSTLCSDARMYGVLPWNAFPGKVCGTSLLAICKTSEFQMTFH) are Extracellular-facing. Intrachain disulfides connect Cys185/Cys229 and Cys202/Cys221. The chain crosses the membrane as a helical span at residues 240–269 (LFIAAFVGAAATLVALLTYMVGASFNYAVL). Topologically, residues 270–280 (RVTGRSDRSKF) are cytoplasmic.

The protein belongs to the myelin proteolipid protein family.

The protein resides in the cell membrane. This is the major myelin protein from the central nervous system. It plays an important role in the formation or maintenance of the multilamellar structure of myelin. This Xenopus laevis (African clawed frog) protein is Myelin proteolipid protein A (plp1-a).